The chain runs to 443 residues: Thymidine phosphorylase (443 aa).

The protein belongs to the thymidine/pyrimidine-nucleoside phosphorylase family. Homodimer.

It catalyses the reaction thymidine + phosphate = 2-deoxy-alpha-D-ribose 1-phosphate + thymine. It functions in the pathway pyrimidine metabolism; dTMP biosynthesis via salvage pathway; dTMP from thymine: step 1/2. Functionally, the enzymes which catalyze the reversible phosphorolysis of pyrimidine nucleosides are involved in the degradation of these compounds and in their utilization as carbon and energy sources, or in the rescue of pyrimidine bases for nucleotide synthesis. In Aliivibrio salmonicida (strain LFI1238) (Vibrio salmonicida (strain LFI1238)), this protein is Thymidine phosphorylase.